We begin with the raw amino-acid sequence, 331 residues long: Phosphate acyltransferase (331 aa).

Belongs to the PlsX family. Homodimer. Probably interacts with PlsY.

Its subcellular location is the cytoplasm. The catalysed reaction is a fatty acyl-[ACP] + phosphate = an acyl phosphate + holo-[ACP]. Its pathway is lipid metabolism; phospholipid metabolism. Catalyzes the reversible formation of acyl-phosphate (acyl-PO(4)) from acyl-[acyl-carrier-protein] (acyl-ACP). This enzyme utilizes acyl-ACP as fatty acyl donor, but not acyl-CoA. The sequence is that of Phosphate acyltransferase from Exiguobacterium sibiricum (strain DSM 17290 / CCUG 55495 / CIP 109462 / JCM 13490 / 255-15).